A 483-amino-acid polypeptide reads, in one-letter code: Betaine aldehyde dehydrogenase (483 aa).

K(+) contacts are provided by isoleucine 27 and aspartate 93. 149–151 (GAW) contacts NAD(+). The active-site Charge relay system is lysine 161. 175–178 (KPSE) lines the NAD(+) pocket. Valine 179 serves as a coordination point for K(+). 228–231 (SVPT) is a binding site for NAD(+). Valine 243 provides a ligand contact to K(+). The active-site Proton acceptor is glutamate 249. The NAD(+) site is built by glycine 251, cysteine 283, and glutamate 380. Cysteine 283 functions as the Nucleophile in the catalytic mechanism. At cysteine 283 the chain carries Cysteine sulfenic acid (-SOH). Residues lysine 450 and glycine 453 each coordinate K(+). The active-site Charge relay system is glutamate 457.

This sequence belongs to the aldehyde dehydrogenase family. Dimer of dimers. Requires K(+) as cofactor.

The enzyme catalyses betaine aldehyde + NAD(+) + H2O = glycine betaine + NADH + 2 H(+). It participates in amine and polyamine biosynthesis; betaine biosynthesis via choline pathway; betaine from betaine aldehyde: step 1/1. Functionally, involved in the biosynthesis of the osmoprotectant glycine betaine. Catalyzes the irreversible oxidation of betaine aldehyde to the corresponding acid. The sequence is that of Betaine aldehyde dehydrogenase from Cereibacter sphaeroides (strain ATCC 17029 / ATH 2.4.9) (Rhodobacter sphaeroides).